The following is a 201-amino-acid chain: LexA repressor (201 aa).

Positions 28–48 (LREIAAQLGISGTLGVMKHLE) form a DNA-binding region, H-T-H motif. Active-site for autocatalytic cleavage activity residues include Ser-120 and Lys-157.

Belongs to the peptidase S24 family. Homodimer.

The catalysed reaction is Hydrolysis of Ala-|-Gly bond in repressor LexA.. Represses a number of genes involved in the response to DNA damage (SOS response), including recA and lexA. In the presence of single-stranded DNA, RecA interacts with LexA causing an autocatalytic cleavage which disrupts the DNA-binding part of LexA, leading to derepression of the SOS regulon and eventually DNA repair. This is LexA repressor from Citrifermentans bemidjiense (strain ATCC BAA-1014 / DSM 16622 / JCM 12645 / Bem) (Geobacter bemidjiensis).